Consider the following 353-residue polypeptide: Photosystem II protein D1 (353 aa).

Residue Thr-2 is modified to N-acetylthreonine. Phosphothreonine is present on Thr-2. Transmembrane regions (helical) follow at residues Tyr-29–Ser-46, His-118–Leu-133, and Trp-142–Ala-156. His-118 serves as a coordination point for chlorophyll a. Tyr-126 serves as a coordination point for pheophytin a. Residues Asp-170 and Glu-189 each contribute to the [CaMn4O5] cluster site. A helical membrane pass occupies residues Phe-197 to Leu-218. His-198 contributes to the chlorophyll a binding site. A quinone contacts are provided by residues His-215 and Ser-264 to Phe-265. His-215 serves as a coordination point for Fe cation. His-272 contacts Fe cation. The helical transmembrane segment at Phe-274–Leu-288 threads the bilayer. [CaMn4O5] cluster is bound by residues His-332, Glu-333, Asp-342, and Ala-344. The propeptide occupies Ala-345 to Gly-353.

This sequence belongs to the reaction center PufL/M/PsbA/D family. In terms of assembly, PSII is composed of 1 copy each of membrane proteins PsbA, PsbB, PsbC, PsbD, PsbE, PsbF, PsbH, PsbI, PsbJ, PsbK, PsbL, PsbM, PsbT, PsbX, PsbY, PsbZ, Psb30/Ycf12, at least 3 peripheral proteins of the oxygen-evolving complex and a large number of cofactors. It forms dimeric complexes. It depends on The D1/D2 heterodimer binds P680, chlorophylls that are the primary electron donor of PSII, and subsequent electron acceptors. It shares a non-heme iron and each subunit binds pheophytin, quinone, additional chlorophylls, carotenoids and lipids. D1 provides most of the ligands for the Mn4-Ca-O5 cluster of the oxygen-evolving complex (OEC). There is also a Cl(-1) ion associated with D1 and D2, which is required for oxygen evolution. The PSII complex binds additional chlorophylls, carotenoids and specific lipids. as a cofactor. Post-translationally, tyr-161 forms a radical intermediate that is referred to as redox-active TyrZ, YZ or Y-Z. C-terminally processed by CTPA; processing is essential to allow assembly of the oxygen-evolving complex and thus photosynthetic growth.

It is found in the plastid. Its subcellular location is the chloroplast thylakoid membrane. The catalysed reaction is 2 a plastoquinone + 4 hnu + 2 H2O = 2 a plastoquinol + O2. Its function is as follows. Photosystem II (PSII) is a light-driven water:plastoquinone oxidoreductase that uses light energy to abstract electrons from H(2)O, generating O(2) and a proton gradient subsequently used for ATP formation. It consists of a core antenna complex that captures photons, and an electron transfer chain that converts photonic excitation into a charge separation. The D1/D2 (PsbA/PsbD) reaction center heterodimer binds P680, the primary electron donor of PSII as well as several subsequent electron acceptors. The protein is Photosystem II protein D1 of Landoltia punctata (Dotted duckmeat).